Reading from the N-terminus, the 15281-residue chain is Cyclosporin synthetase simA (15281 aa).

The condensation 1 stretch occupies residues 34-463; sequence SFAQGRLWFL…AVHVKTMPLT (430 aa). The segment at 513 to 918 is adenylation 1; sequence SYSELDHKSD…NSDQVRDAAV (406 aa). The Carrier 1 domain maps to 1026 to 1100; that stretch reads APRNEIEAVL…DLAATIQRGS (75 aa). Ser-1060 is modified (O-(pantetheine 4'-phosphoryl)serine). The segment at 1118–1549 is condensation 2; the sequence is SFAQGRLWFL…QTPIMTMPLT (432 aa). The interval 1599 to 2004 is adenylation 2; sequence SYAELDQRSD…SSAGVHDAVV (406 aa). Residues 2067–2251 are methyltransferase (M) domain 1; that stretch reads SWTSMYDGTL…LEELEEELLV (185 aa). The Carrier 2 domain occupies 2524-2598; sequence APRDSIEAII…DLAATIQQDT (75 aa). The residue at position 2558 (Ser-2558) is an O-(pantetheine 4'-phosphoryl)serine. Residues 2616 to 3044 form a condensation 3 region; it reads SFAQGRLWFL…EPDMPVASMA (429 aa). Residues 3096–3498 are adenylation 3; that stretch reads SYADLDRKSD…SHDLVTDAAV (403 aa). Positions 3562 to 3749 are methyltransferase (M) domain 2; sequence SMYDGSLIKK…EDELLVDPAF (188 aa). The Carrier 3 domain maps to 4011–4085; the sequence is APRTEIERVL…DLVLIVQQGS (75 aa). Ser-4045 bears the O-(pantetheine 4'-phosphoryl)serine mark. Residues 4100-4530 are condensation 4; the sequence is VPQSFAQGRL…GPDVPISTLP (431 aa). Positions 4582–4986 are adenylation 4; it reads SYAQLDRESD…FLNDGFVEDV (405 aa). Residues 5052–5241 are methyltransferase (M) domain 3; that stretch reads TSMYDGTEID…ELLVDPAFFT (190 aa). Residues 5503 to 5577 form the Carrier 4 domain; it reads PPRNSVEATV…DLAAVIQRNS (75 aa). Ser-5537 carries the O-(pantetheine 4'-phosphoryl)serine modification. The condensation 5 stretch occupies residues 5592 to 6023; it reads VPQSFAQGRL…QPLTPLAVLP (432 aa). Positions 6075 to 6478 are adenylation 5; that stretch reads TYAQLDQQSD…SHNSVQDAAV (404 aa). The methyltransferase (M) domain 4 stretch occupies residues 6545–6729; that stretch reads WTSMYDGSEI…ELEANEEELL (185 aa). In terms of domain architecture, Carrier 5 spans 7000-7074; it reads APRNEIEAIL…DLAASIQRES (75 aa). Residue Ser-7034 is modified to O-(pantetheine 4'-phosphoryl)serine. Residues 7092–7517 form a condensation 6 region; that stretch reads SFAQGRLWFL…VLDQPLTPIS (426 aa). An adenylation 6 region spans residues 7572–7976; sequence TYAQLDEQSD…DHKSVLAATV (405 aa). Residues 8060–8134 form the Carrier 6 domain; sequence PPRDEVEAVL…DLADIIRRGS (75 aa). Ser-8094 is modified (O-(pantetheine 4'-phosphoryl)serine). A condensation 7 region spans residues 8152–8582; that stretch reads SFAQGRLWFL…PKQRLMAMPI (431 aa). The segment at 8633–9038 is adenylation 7; it reads TYADLDGQSN…GHDLVHDAAV (406 aa). Positions 9111-9288 are methyltransferase (M) domain 5; the sequence is PVNEMKEWLD…EESEEELLVD (178 aa). The 75-residue stretch at 9555–9629 folds into the Carrier 7 domain; that stretch reads APRNDTEIVL…DLAASIEQGS (75 aa). Ser-9589 carries the O-(pantetheine 4'-phosphoryl)serine modification. The interval 9647 to 10077 is condensation 8; sequence SYAQGRLWFL…QVSISTMPLT (431 aa). Residues 10127–10529 form an adenylation 8 region; the sequence is SYTSLDQKSE…GNKAIHDAAV (403 aa). Residues 10588–10768 are methyltransferase (M) domain 6; the sequence is RDFTSWTSMY…DQIRQEVARL (181 aa). One can recognise a Carrier 8 domain in the interval 11052–11126; the sequence is APRNDIEAVL…DLADVVQTGS (75 aa). Position 11086 is an O-(pantetheine 4'-phosphoryl)serine (Ser-11086). A condensation 9 region spans residues 11144–11567; the sequence is SFSQGRLWFL…HANLATLPLT (424 aa). The interval 11616–12019 is adenylation 9; the sequence is TYTELDERSS…RDPAISDSAV (404 aa). The 75-residue stretch at 12124–12198 folds into the Carrier 9 domain; it reads APRNDIETII…QLAASIQQGS (75 aa). Ser-12158 is subject to O-(pantetheine 4'-phosphoryl)serine. Residues 12216–12645 are condensation 10; it reads SFAQGRLWFL…IAISTMPLVD (430 aa). Positions 12696-13096 are adenylation 10; it reads TYAELDQQSD…SDSSINDAVV (401 aa). Residues 13162 to 13343 form a methyltransferase (M) domain 7 region; it reads YDGSLIPREE…EDDEEELLVD (182 aa). Positions 13620–13694 constitute a Carrier 10 domain; the sequence is APRTEIEVVL…DLAASILQGS (75 aa). Residue Ser-13654 is modified to O-(pantetheine 4'-phosphoryl)serine. The tract at residues 13710–14143 is condensation 11; the sequence is EQSFAQGRLW…PQSPIATMPL (434 aa). Positions 14194-14598 are adenylation 11; sequence TYAELDRLSD…SENSVTDAAV (405 aa). The Carrier 11 domain maps to 14695–14769; the sequence is APRNETEAAI…SLAGKLEQQQ (75 aa). An O-(pantetheine 4'-phosphoryl)serine modification is found at Ser-14729. The condensation 12 stretch occupies residues 14814–15158; that stretch reads DMYPATQTQI…HPEAEIEGQQ (345 aa). A disordered region spans residues 15169–15224; it reads QARQANGHAPNGTNGTNGTNGTNGANGTNGTNGTNGTHANGINGSNGVNGRDSNVV. Residues 15173–15211 show a composition bias toward low complexity; that stretch reads ANGHAPNGTNGTNGTNGTNGANGTNGTNGTNGTHANGIN. Polar residues predominate over residues 15213–15224; it reads SNGVNGRDSNVV.

It belongs to the NRP synthetase family. Requires pantetheine 4'-phosphate as cofactor.

Its function is as follows. Nonribosomal peptide synthetase; part of the gene cluster that mediates the biosynthesis of the cycloundecapeptide cyclosporin A (CsA), a compound with antifungal activity used as an immunosuppressant drug. Cyclosporin A contains three non-proteinogenic amino acids: D-alanine, alpha-amino butyric acid and the unusual amino acid (4R)-4-[(E)-2-butenyl]-4-methyl-l-threonine (Bmt). The nonribosomal peptide synthetase (NRPS) catalyzes the elongation and cyclization of the undecapeptide chain. SimA contains 11 modules responsible for sequential uptake of substrates and chain elongation. In addition to the core condensation-adenylation-thiolation (C-A-T) domains present in each module, seven modules contain an additional N-methylation (M) domain (modules 2, 3, 4, 5, 7, 8, and 10). The terminal C domain (C12 or Ct) is implicated in cyclization of the peptidyl chains to form CsA. The first module (A1) takes up D-Ala which is provided by the alanine racemase simB. The A2, A3, A8, and A10 domains have the same substrate-specific signature for recognition of leucine residues. The unusual amino acid (4R)-4-[(E)-2-butenyl]-4-methyl-l-threonine (Bmt) is recognized by the fifth module (A5). The A11 domain recognizes L-Ala. The PKS simG mediates the biosynthesis of 3R-hydroxyl-4R-methyl-6E-octenoic acid from acetyl coenzyme A (acetyl-CoA), malonyl-CoA, and S-adenosylmethionine, and 3R-hydroxyl-4R-methyl-6E-octenoic acid is then be repeatedly oxidized by simI to 3R-hydroxy-4R-methyl-2-keto-6E-octenoic acid. The latter is likely converted to Bmt through the action of the aminotransferase SimJ. The chain is Cyclosporin synthetase simA from Tolypocladium inflatum (Cyclosporin fungus).